Reading from the N-terminus, the 134-residue chain is Cytochrome c-type biogenesis protein CcmE (134 aa).

The Cytoplasmic portion of the chain corresponds to methionine 1 to arginine 7. Residues leucine 8–lysine 28 form a helical; Signal-anchor for type II membrane protein membrane-spanning segment. At leucine 29–leucine 134 the chain is on the periplasmic side. 2 residues coordinate heme: histidine 120 and tyrosine 124.

Belongs to the CcmE/CycJ family.

It localises to the cell inner membrane. Functionally, heme chaperone required for the biogenesis of c-type cytochromes. Transiently binds heme delivered by CcmC and transfers the heme to apo-cytochromes in a process facilitated by CcmF and CcmH. The chain is Cytochrome c-type biogenesis protein CcmE from Ehrlichia ruminantium (strain Gardel).